The primary structure comprises 121 residues: Trypsin/alpha-amylase inhibitor CMX1/CMX3 (121 aa).

Positions 1-24 are cleaved as a signal peptide; that stretch reads MAFKHQLILSTAILLAVLAAASAS.

Belongs to the protease inhibitor I6 (cereal trypsin/alpha-amylase inhibitor) family.

The protein localises to the secreted. The protein is Trypsin/alpha-amylase inhibitor CMX1/CMX3 of Triticum aestivum (Wheat).